The following is a 203-amino-acid chain: High frequency lysogenization protein HflD homolog (203 aa).

Belongs to the HflD family.

It localises to the cytoplasm. Its subcellular location is the cell inner membrane. In Dichelobacter nodosus (strain VCS1703A), this protein is High frequency lysogenization protein HflD homolog.